Here is a 342-residue protein sequence, read N- to C-terminus: Elongation factor Ts (342 aa).

The tract at residues 80–83 is involved in Mg(2+) ion dislocation from EF-Tu; it reads TDFV.

This sequence belongs to the EF-Ts family.

The protein localises to the cytoplasm. Its function is as follows. Associates with the EF-Tu.GDP complex and induces the exchange of GDP to GTP. It remains bound to the aminoacyl-tRNA.EF-Tu.GTP complex up to the GTP hydrolysis stage on the ribosome. The polypeptide is Elongation factor Ts (Lactobacillus delbrueckii subsp. bulgaricus (strain ATCC 11842 / DSM 20081 / BCRC 10696 / JCM 1002 / NBRC 13953 / NCIMB 11778 / NCTC 12712 / WDCM 00102 / Lb 14)).